We begin with the raw amino-acid sequence, 156 residues long: Small ribosomal subunit protein uS7c (156 aa).

This sequence belongs to the universal ribosomal protein uS7 family. Part of the 30S ribosomal subunit.

It is found in the plastid. Its function is as follows. One of the primary rRNA binding proteins, it binds directly to 16S rRNA where it nucleates assembly of the head domain of the 30S subunit. This Prototheca wickerhamii protein is Small ribosomal subunit protein uS7c (rps7).